A 262-amino-acid polypeptide reads, in one-letter code: Shikimate dehydrogenase (NADP(+)) (262 aa).

Residues 15–17 and T62 contribute to the shikimate site; that span reads SRS. K66 (proton acceptor) is an active-site residue. Residue E78 participates in NADP(+) binding. Shikimate is bound by residues N87 and D102. NADP(+)-binding positions include 126 to 130, 150 to 155, and M214; these read GAGGA and NRTLAR. Y216 contacts shikimate. G236 contacts NADP(+).

The protein belongs to the shikimate dehydrogenase family. In terms of assembly, homodimer.

The catalysed reaction is shikimate + NADP(+) = 3-dehydroshikimate + NADPH + H(+). It participates in metabolic intermediate biosynthesis; chorismate biosynthesis; chorismate from D-erythrose 4-phosphate and phosphoenolpyruvate: step 4/7. Functionally, involved in the biosynthesis of the chorismate, which leads to the biosynthesis of aromatic amino acids. Catalyzes the reversible NADPH linked reduction of 3-dehydroshikimate (DHSA) to yield shikimate (SA). The sequence is that of Shikimate dehydrogenase (NADP(+)) from Acinetobacter baumannii (strain AB307-0294).